We begin with the raw amino-acid sequence, 325 residues long: D-alanine--D-alanine ligase (325 aa).

Residues 107–311 (KRLLLSESLP…YEALCVEVLK (205 aa)) form the ATP-grasp domain. 137–192 (VDTLGLPLIVKPAREGSSLGLSKVTERAAMAAAVALAEKMDADILCEQFISGDEVT) is a binding site for ATP. Residues Asp264, Glu278, and Asn280 each contribute to the Mg(2+) site.

This sequence belongs to the D-alanine--D-alanine ligase family. Requires Mg(2+) as cofactor. Mn(2+) serves as cofactor.

The protein resides in the cytoplasm. The catalysed reaction is 2 D-alanine + ATP = D-alanyl-D-alanine + ADP + phosphate + H(+). It participates in cell wall biogenesis; peptidoglycan biosynthesis. Functionally, cell wall formation. The sequence is that of D-alanine--D-alanine ligase from Polaromonas naphthalenivorans (strain CJ2).